The sequence spans 344 residues: Lipase chaperone (344 aa).

The chain crosses the membrane as a helical span at residues 14–34 (VAVYGAVGLAAIAGVAIWSGA). Low complexity predominate over residues 45 to 57 (LSADAAARDGASA). The tract at residues 45-78 (LSADAAARDGASAAPPPPARPASAGMPSPLAGSS) is disordered.

This sequence belongs to the lipase chaperone family.

The protein localises to the cell inner membrane. May be involved in the folding of the extracellular lipase during its passage through the periplasm. The chain is Lipase chaperone from Burkholderia ambifaria (strain ATCC BAA-244 / DSM 16087 / CCUG 44356 / LMG 19182 / AMMD) (Burkholderia cepacia (strain AMMD)).